The sequence spans 552 residues: MALEDRCSPQSAPSPITLQMQHLHHQQQQQQQQQQQMQHLHQLQQLQQLHQQQLAAGVFHHPAMAFDAAAAAAAAAAAAAAHAHAAALQQRLSGSGSPASCSTPASSTPLTIKEEESDSVIGDMSFHNQTHTTNEEEEAEEDDDIDVDVDDTSAGGRLPPPAHQQQSTAKPSLAFSISNILSDRFGDVQKPGKSMENQASIFRPFEASRSQTATPSAFTRVDLLEFSRQQQAAAAAATAAMMLERANFLNCFNPAAYPRIHEEIVQSRLRRSAANAVIPPPMSSKMSDANPEKSALGSLCKAVSQIGQPAAPTMTQPPLSSSASSLASPPPASNASTISSTSSVATSSSSSSSGCSSAASSLNSSPSSRLGASGSGVNASSPQPQPIPPPSAVSRDSGMESSDDTRSETGSTTTEGGKNEMWPAWVYCTRYSDRPSSGPRYRRPKQPKDKTNDEKRPRTAFSSEQLARLKREFNENRYLTERRRQQLSSELGLNEAQIKIWFQNKRAKIKKSTGSKNPLALQLMAQGLYNHTTVPLTKEEEELEMRMNGQIP.

The span at 93–108 (SGSGSPASCSTPASST) shows a compositional bias: low complexity. 4 disordered regions span residues 93–112 (SGSGSPASCSTPASSTPLTI), 130–171 (THTT…TAKP), 309–419 (PAAP…GGKN), and 433–460 (DRPSSGPRYRRPKQPKDKTNDEKRPRTA). Residues 135–151 (EEEEAEEDDDIDVDVDD) are compositionally biased toward acidic residues. Positions 317 to 382 (PPLSSSASSL…SGSGVNASSP (66 aa)) are enriched in low complexity. Residues 446 to 457 (QPKDKTNDEKRP) show a composition bias toward basic and acidic residues. Residues 454–513 (EKRPRTAFSSEQLARLKREFNENRYLTERRRQQLSSELGLNEAQIKIWFQNKRAKIKKST) constitute a DNA-binding region (homeobox).

Belongs to the engrailed homeobox family. Phosphorylated. Phosphorylation may directly or allosterically modify its function.

The protein localises to the nucleus. This protein specifies the body segmentation pattern. It is required for the development of the central nervous system. Transcriptional regulator that represses activated promoters. Wg signaling operates by inactivating the SGG repression of EN autoactivation. This chain is Segmentation polarity homeobox protein engrailed (en), found in Drosophila melanogaster (Fruit fly).